The chain runs to 256 residues: MRYALGVEYDGSDFRGWQNLGEGGPSVQASLEQALSSVADTPLQVVCAGRTDAGVHGQCQVVHFDTDVVRDPRAWMLGTTTRLPRSIAVRWCVPVADDFHARFSARARRYRYRLLNREVRPALDRQTLSWERRALDETLMHAAGQALIGENDFSAFRSVQCQALHARRELQSLQVSRQGEVIEVAVQGNAFLHHMVRNIVGSLILVGSGEKPVEWIAELLAGRDRTVAGPTAPPQGLVFLGPLYPDNWHLPAEVTL.

The Nucleophile role is filled by Asp-52. Tyr-110 contributes to the substrate binding site.

Belongs to the tRNA pseudouridine synthase TruA family. Homodimer.

The enzyme catalyses uridine(38/39/40) in tRNA = pseudouridine(38/39/40) in tRNA. In terms of biological role, formation of pseudouridine at positions 38, 39 and 40 in the anticodon stem and loop of transfer RNAs. This chain is tRNA pseudouridine synthase A, found in Stenotrophomonas maltophilia (strain K279a).